A 164-amino-acid chain; its full sequence is CASP-like protein 1C1 (164 aa).

The Cytoplasmic segment spans residues 1–15 (MGDVEIPPLVKQIVR). Residues 16–36 (GLRGLAFLATILATSFMAASH) form a helical membrane-spanning segment. Residues 37 to 56 (ERAIFPFDYKADYTDLMLFK) lie on the Extracellular side of the membrane. Residues 57-77 (AFLGANIAASLYSFFFVCLPP) form a helical membrane-spanning segment. Over 78 to 83 (KSLLWR) the chain is Cytoplasmic. The helical transmembrane segment at 84–104 (LAIVLDVIMFGLLVAMDSAAI) threads the bilayer. Residues 105-132 (AAAYLHKHGDSQAFWPPICSQVPTYCYR) lie on the Extracellular side of the membrane. A helical membrane pass occupies residues 133-153 (VILAISIGFGGVFMFLLIIII). Topologically, residues 154–164 (SISVILNPLLV) are cytoplasmic.

The protein belongs to the Casparian strip membrane proteins (CASP) family. In terms of assembly, homodimer and heterodimers.

The protein resides in the cell membrane. The chain is CASP-like protein 1C1 from Populus trichocarpa (Western balsam poplar).